The primary structure comprises 147 residues: Hemoglobin subunit beta (147 aa).

At Val-2 the chain carries N-acetylvaline. The Globin domain occupies His-3–His-147. The residue at position 45 (Ser-45) is a Phosphoserine. Lys-60 carries the N6-acetyllysine modification. His-64 provides a ligand contact to heme b. The residue at position 83 (Lys-83) is an N6-acetyllysine. Residue His-93 coordinates heme b. Residue Cys-94 is modified to S-nitrosocysteine. Lys-145 is modified (N6-acetyllysine).

Belongs to the globin family. In terms of assembly, heterotetramer of two alpha chains and two beta chains. In terms of tissue distribution, red blood cells.

Functionally, involved in oxygen transport from the lung to the various peripheral tissues. This is Hemoglobin subunit beta (HBB) from Bradypus tridactylus (Pale-throated three-toed sloth).